Here is a 351-residue protein sequence, read N- to C-terminus: Succinylglutamate desuccinylase (351 aa).

Zn(2+) is bound by residues His-73, Glu-76, and His-168. The active site involves Glu-231.

The protein belongs to the AspA/AstE family. Succinylglutamate desuccinylase subfamily. Zn(2+) serves as cofactor.

It carries out the reaction N-succinyl-L-glutamate + H2O = L-glutamate + succinate. It functions in the pathway amino-acid degradation; L-arginine degradation via AST pathway; L-glutamate and succinate from L-arginine: step 5/5. Its function is as follows. Transforms N(2)-succinylglutamate into succinate and glutamate. The protein is Succinylglutamate desuccinylase of Burkholderia lata (strain ATCC 17760 / DSM 23089 / LMG 22485 / NCIMB 9086 / R18194 / 383).